A 315-amino-acid chain; its full sequence is Small ribosomal subunit biogenesis GTPase RsgA (315 aa).

One can recognise a CP-type G domain in the interval 79–243 (LSKESHILGA…LIDTPGIKGF (165 aa)). Residues 128–131 (NKID) and 182–190 (GHSGVGKSS) contribute to the GTP site. 4 residues coordinate Zn(2+): Cys-267, Cys-272, His-274, and Cys-280.

Belongs to the TRAFAC class YlqF/YawG GTPase family. RsgA subfamily. In terms of assembly, monomer. Associates with 30S ribosomal subunit, binds 16S rRNA. Requires Zn(2+) as cofactor.

It localises to the cytoplasm. In terms of biological role, one of several proteins that assist in the late maturation steps of the functional core of the 30S ribosomal subunit. Helps release RbfA from mature subunits. May play a role in the assembly of ribosomal proteins into the subunit. Circularly permuted GTPase that catalyzes slow GTP hydrolysis, GTPase activity is stimulated by the 30S ribosomal subunit. This is Small ribosomal subunit biogenesis GTPase RsgA from Porphyromonas gingivalis (strain ATCC 33277 / DSM 20709 / CIP 103683 / JCM 12257 / NCTC 11834 / 2561).